We begin with the raw amino-acid sequence, 203 residues long: Small ribosomal subunit protein uS4c (203 aa).

The disordered stretch occupies residues 15 to 42 (LGALPGLTSKRPRAGSDPRNQELSGNKS). Residues 89-150 (MRLDNILFRL…DQKSKAMIQN (62 aa)) enclose the S4 RNA-binding domain.

This sequence belongs to the universal ribosomal protein uS4 family. Part of the 30S ribosomal subunit. Contacts protein S5. The interaction surface between S4 and S5 is involved in control of translational fidelity.

The protein localises to the plastid. The protein resides in the chloroplast. Functionally, one of the primary rRNA binding proteins, it binds directly to 16S rRNA where it nucleates assembly of the body of the 30S subunit. Its function is as follows. With S5 and S12 plays an important role in translational accuracy. This is Small ribosomal subunit protein uS4c (rps4) from Oenothera elata subsp. hookeri (Hooker's evening primrose).